A 371-amino-acid chain; its full sequence is MAAEQRRSTIFDIVSKCIVQSVLRDISINSEYIESKAKQLCYCPASKKESVINGIYNCCESNIEIMDKEQLLKILDNLRCHSAHVCNATDFWRLYNSLKRFTHTTAFFNTCKPTILATLNTLITLILSNKLLYAAEMVEYLENQLDSSNKSMSQELAELLEMKYALINLVQYRILPMIIGEPIIVAGFSGKEPISNYSAEVERLMELPVKTDIVNTTYDFLARKGIDTSNNIAEYIAGLKIEEIEKVEKYLPEVISTIANSNIIKNKKSIFPANINDKQIMECSKMLDTSEKYSKGYKTDGAVTSPLTGNNTITTFIPISASDMQKFTILEYLYIMRVMANNVKKKNEGKNNGGVVMHINSPFKVINLPKC.

Belongs to the chordopoxvirinae G7 family. Part of a complex composed of A30, G7, F10 kinase, A15, D2, D3, and J1. In terms of processing, phosphorylated on serines by F10 kinase, phosphorylation state is regulated by H1 phosphatase. Post-translationally, undergoes proteolytic processing during morphogenesis, probably required for the transformation of immature virions (IV) into mature virions (MV).

The protein resides in the host cytoplasm. Its subcellular location is the virion. In terms of biological role, late protein which is a part of a large complex required for early virion morphogenesis. This complex participates in the formation of virosomes and the incorporation of virosomal contents into nascent immature virions. The sequence is that of Assembly protein G7 from Variola virus (isolate Human/India/Ind3/1967) (VARV).